Here is a 306-residue protein sequence, read N- to C-terminus: MTNEFLHFEKISRQTWQSLHRKTTPPLTEEELESIKSFNDQISLQDVTDIYLPLAHLIQIYKRTKEDLAFSKGIFLQRESKSQPFIIGVSGSVAVGKSTTSRLLQILLSRTFTDATVELVTTDGFLYPNQTLIEQGILNRKGFPESYDMEALLNFLDRIKNGQDVDIPVYSHEVYDIVPEEKQSVKAADFVIVEGINVFQNPQNDRLYITDFFDFSIYVDAGVDDIESWYLDRFLKMLSLAQNDPDSYYYRFTQMPIGEVEAFAHQVWISINLTNLQNYIEPTRNRAEVILHKSKNHEIDEIYLKK.

An ATP-binding site is contributed by 91 to 98 (GSVAVGKS).

This sequence belongs to the prokaryotic pantothenate kinase family.

The protein localises to the cytoplasm. The enzyme catalyses (R)-pantothenate + ATP = (R)-4'-phosphopantothenate + ADP + H(+). The protein operates within cofactor biosynthesis; coenzyme A biosynthesis; CoA from (R)-pantothenate: step 1/5. The chain is Pantothenate kinase from Streptococcus pneumoniae (strain Hungary19A-6).